We begin with the raw amino-acid sequence, 334 residues long: Glyceraldehyde-3-phosphate dehydrogenase (334 aa).

NAD(+) contacts are provided by residues 12-13 (TI) and G111. 140 to 142 (SCN) contacts D-glyceraldehyde 3-phosphate. The active-site Nucleophile is C141. R167 is an NAD(+) binding site. Residue 192-193 (HG) participates in D-glyceraldehyde 3-phosphate binding. NAD(+) is bound at residue Q298.

Belongs to the glyceraldehyde-3-phosphate dehydrogenase family. Homotetramer.

Its subcellular location is the cytoplasm. It carries out the reaction D-glyceraldehyde 3-phosphate + phosphate + NADP(+) = (2R)-3-phospho-glyceroyl phosphate + NADPH + H(+). It catalyses the reaction D-glyceraldehyde 3-phosphate + phosphate + NAD(+) = (2R)-3-phospho-glyceroyl phosphate + NADH + H(+). It participates in carbohydrate degradation; glycolysis; pyruvate from D-glyceraldehyde 3-phosphate: step 1/5. In Thermococcus kodakarensis (strain ATCC BAA-918 / JCM 12380 / KOD1) (Pyrococcus kodakaraensis (strain KOD1)), this protein is Glyceraldehyde-3-phosphate dehydrogenase.